Reading from the N-terminus, the 104-residue chain is Large ribosomal subunit protein uL23 (104 aa).

The protein belongs to the universal ribosomal protein uL23 family. As to quaternary structure, part of the 50S ribosomal subunit. Contacts protein L29, and trigger factor when it is bound to the ribosome.

Functionally, one of the early assembly proteins it binds 23S rRNA. One of the proteins that surrounds the polypeptide exit tunnel on the outside of the ribosome. Forms the main docking site for trigger factor binding to the ribosome. The protein is Large ribosomal subunit protein uL23 of Ralstonia pickettii (strain 12J).